Here is a 1068-residue protein sequence, read N- to C-terminus: MEGKLFLGQYLICVILLLGQLHGYKSCIEKERKALLELKAFLIPLNAGEWNDNVLSWTNDTKSDCCQWMGVECNRKSGRITNIAFGIGFIIENPLLNLSLLHPFEDVRSLDLSSSRSCEDCGFSGLFDDVEGYKSLSRLRNLEILDLSSHRFNNSIFPFLNAATSLTTLFLTYNNMHSPFLVKEFKDLTNLEHLDLRGNRFNGSIPTQDYNSLRRFRKLEILDLSDNLFNSRIFPFLNSATSLKSLSLWGNNMGGPFPAKELRDLTNVELLDLSRNRFNGSIPVRALFALRKLKALDLSDNEFSSSVELQGKFAKTKPLSGTCPWKNMEELKLSNNKLAGQFPLCLTSLTGLRVLDLSSNQLTGNVPSALANLESLEYLSLFGNNFEGFFSLGLLANLSKLKVLRLDSQSNSLEVEFETSWKPKFQLVVIALRSCNLEKVPHFLLHQKDLHHVDLSDNQIHGNFPSWLLENNTKLEVLLLQNNSFTSFQLPKSAHNLLFLNVSVNKFNHLFLQNFGWILPHLVCVNLAYNGFQGNLPSSLDNMKSIEFLDLSHNRFHGKLPRRFLKGCYNLTILKLSHNKLSGEVFPEAANFTRLWVMSMDNNLFTGNIGKGFRSLPSLNVLDISNNKLTGVIPSWIGERQGLFALQLSNNMLEGEIPTSLFNISYLQLLDLSSNRLSGDIPPHVSSIYHGAVLLLQNNNLSGVIPDTLLLNVIVLDLRNNRLSGNLPEFINTQNISILLLRGNNFTGQIPHQFCSLSNIQLLDLSNNKFNGSIPSCLSNTSFGLRKGDDSYRYDVPSRFGTAKDPVYFESLLMIDEFNMVNETNSQTKIEFATKHRYDAYMGGNLKLLFGMDLSENELSGEIPVELGGLVELEALNLSHNNLSGVILESFSGLKNVESLDLSFNRLQGPIPLQLTDMISLAVFNVSYNNLSGIVPQGRQFNTFETQSYFGNPLLCGKSIDISCASNNFHPTDNGVEADESTVDMESFYWSFVAAYVTILLGILASLSFDSPWSRAWFYIVDAFVLKVRNMLWQNTAGTKCSYVLVSLSSPSVVVLLKPPALFHKTRT.

A signal peptide spans M1 to G23. Topologically, residues Y24–E986 are extracellular. N-linked (GlcNAc...) asparagine glycosylation is found at N59 and N97. LRR repeat units follow at residues F104–D129, L139–A162, T164–D187, L188–S212, F216–S239, T241–D264, L265–L290, K292–K315, W325–L349, T350–L373, S375–N397, L398–P423, K424–Q447, K448–N471, N472–L497, F499–W517, L519–M543, K544–G567, and Y569–R594. N-linked (GlcNAc...) asparagine glycosylation occurs at N153. The N-linked (GlcNAc...) asparagine glycan is linked to N202. N-linked (GlcNAc...) asparagine glycosylation is present at N279. N397 carries N-linked (GlcNAc...) asparagine glycosylation. Residues N471, N482, and N501 are each glycosylated (N-linked (GlcNAc...) asparagine). Residues N570 and N591 are each glycosylated (N-linked (GlcNAc...) asparagine). The LRR 20; degenerate repeat unit spans residues W596 to S615. 5 LRR repeats span residues L616–E639, Q641–I664, S665–I688, H690–L710, and L711–Q734. N663 carries N-linked (GlcNAc...) asparagine glycosylation. N700 is a glycosylation site (N-linked (GlcNAc...) asparagine). 5 N-linked (GlcNAc...) asparagine glycosylation sites follow: N735, N745, N771, N780, and N822. 2 LRR repeats span residues I736–L757 and S758–T781. LRR repeat units follow at residues L846 to L870, V871 to G893, K895 to M918, and S920 to T943. Residues N877 and N882 are each glycosylated (N-linked (GlcNAc...) asparagine). N-linked (GlcNAc...) asparagine glycans are attached at residues N925 and N930. The helical transmembrane segment at S987 to L1007 threads the bilayer. Topologically, residues S1008–T1068 are cytoplasmic.

This sequence belongs to the RLP family.

The protein localises to the cell membrane. The sequence is that of Receptor-like protein 13 from Arabidopsis thaliana (Mouse-ear cress).